Consider the following 190-residue polypeptide: Major intrinsically disordered NOTCH2-binding receptor 1-like (190 aa).

At serine 79 the chain carries Phosphoserine. N-linked (GlcNAc...) asparagine glycosylation is found at asparagine 109 and asparagine 125. The chain crosses the membrane as a helical span at residues 169-189 (GLILLVVISILVTIVTIITFF).

This sequence belongs to the MINAR family. In terms of assembly, interacts with NOTCH2. In terms of tissue distribution, highly expressed in the auditory hair cells.

The protein resides in the lysosome membrane. It localises to the endoplasmic reticulum membrane. In terms of biological role, binds cholesterol and may regulate the distribution and homeostasis of cholesterol in hair cells. May play a role in angiogenesis. This chain is Major intrinsically disordered NOTCH2-binding receptor 1-like, found in Homo sapiens (Human).